The chain runs to 53 residues: Temporin-SHd (53 aa).

A signal peptide spans 1-10 (FLGTINLSLC). A propeptide spanning residues 11–34 (EQERDADEEKRDEPDESDVEVEKR) is cleaved from the precursor. Phe51 bears the Phenylalanine amide mark.

It is found in the secreted. Its subcellular location is the target cell membrane. In terms of biological role, non-amphipathic mildly cationic alpha-helical antimicrobial peptide with potent activity against Gram-positive (including methicillin-resistant Staphylococcus aureus (MRSA)) and Gram-negative bacteria, and some fungi, as well as against Trypanosoma and Leishmania (both promastigote and amastigote forms). Strongly and selectively perturbs anionic bilayer membranes by interacting with the polar head groups and acyl region of the phospholipids, with formation of regions of two coexisting phases, one phase rich in peptide and the other lipid-rich. Shows low hemolytic activity (LC(50)=44 uM) and a low toxicity for human monocytes THP-1 and THP-1-derived macrophages. Is not toxic to human hepatoma-derived cells. This chain is Temporin-SHd, found in Pelophylax saharicus (Sahara frog).